We begin with the raw amino-acid sequence, 117 residues long: Large ribosomal subunit protein uL24 (117 aa).

Belongs to the universal ribosomal protein uL24 family. Part of the 50S ribosomal subunit.

In terms of biological role, one of two assembly initiator proteins, it binds directly to the 5'-end of the 23S rRNA, where it nucleates assembly of the 50S subunit. Located at the polypeptide exit tunnel on the outside of the subunit. The sequence is that of Large ribosomal subunit protein uL24 from Methanothermobacter thermautotrophicus (strain ATCC 29096 / DSM 1053 / JCM 10044 / NBRC 100330 / Delta H) (Methanobacterium thermoautotrophicum).